A 363-amino-acid polypeptide reads, in one-letter code: Protein RecA (363 aa).

ATP is bound at residue Gly79–Thr86.

This sequence belongs to the RecA family.

The protein localises to the cytoplasm. Can catalyze the hydrolysis of ATP in the presence of single-stranded DNA, the ATP-dependent uptake of single-stranded DNA by duplex DNA, and the ATP-dependent hybridization of homologous single-stranded DNAs. It interacts with LexA causing its activation and leading to its autocatalytic cleavage. This chain is Protein RecA, found in Methylobacterium radiotolerans (strain ATCC 27329 / DSM 1819 / JCM 2831 / NBRC 15690 / NCIMB 10815 / 0-1).